Here is a 195-residue protein sequence, read N- to C-terminus: Shikimate kinase (195 aa).

Position 31–36 (Gly31–Cys36) interacts with ATP. Ser35 lines the Mg(2+) pocket. 3 residues coordinate substrate: Asp53, Arg77, and Gly99. Position 137 (Arg137) interacts with ATP. Arg156 serves as a coordination point for substrate.

Belongs to the shikimate kinase family. In terms of assembly, monomer. It depends on Mg(2+) as a cofactor.

The protein localises to the cytoplasm. It carries out the reaction shikimate + ATP = 3-phosphoshikimate + ADP + H(+). The protein operates within metabolic intermediate biosynthesis; chorismate biosynthesis; chorismate from D-erythrose 4-phosphate and phosphoenolpyruvate: step 5/7. Functionally, catalyzes the specific phosphorylation of the 3-hydroxyl group of shikimic acid using ATP as a cosubstrate. The polypeptide is Shikimate kinase (Paramagnetospirillum magneticum (strain ATCC 700264 / AMB-1) (Magnetospirillum magneticum)).